A 336-amino-acid chain; its full sequence is tRNA N6-adenosine threonylcarbamoyltransferase (336 aa).

Fe cation is bound by residues H112 and H116. Substrate is bound by residues 136–140 (LVSGG), D169, G182, and N276. D304 serves as a coordination point for Fe cation.

Belongs to the KAE1 / TsaD family. The cofactor is Fe(2+).

It is found in the cytoplasm. It catalyses the reaction L-threonylcarbamoyladenylate + adenosine(37) in tRNA = N(6)-L-threonylcarbamoyladenosine(37) in tRNA + AMP + H(+). Functionally, required for the formation of a threonylcarbamoyl group on adenosine at position 37 (t(6)A37) in tRNAs that read codons beginning with adenine. Is involved in the transfer of the threonylcarbamoyl moiety of threonylcarbamoyl-AMP (TC-AMP) to the N6 group of A37, together with TsaE and TsaB. TsaD likely plays a direct catalytic role in this reaction. The protein is tRNA N6-adenosine threonylcarbamoyltransferase of Francisella tularensis subsp. tularensis (strain FSC 198).